The sequence spans 512 residues: ATP synthase subunit alpha (512 aa).

169–176 (GDRQTGKT) is a binding site for ATP.

This sequence belongs to the ATPase alpha/beta chains family. As to quaternary structure, F-type ATPases have 2 components, CF(1) - the catalytic core - and CF(0) - the membrane proton channel. CF(1) has five subunits: alpha(3), beta(3), gamma(1), delta(1), epsilon(1). CF(0) has four main subunits: a(1), b(1), b'(1) and c(9-12).

The protein localises to the cell inner membrane. The enzyme catalyses ATP + H2O + 4 H(+)(in) = ADP + phosphate + 5 H(+)(out). Functionally, produces ATP from ADP in the presence of a proton gradient across the membrane. The alpha chain is a regulatory subunit. In Jannaschia sp. (strain CCS1), this protein is ATP synthase subunit alpha.